A 190-amino-acid chain; its full sequence is Female-specific histamine-binding protein 1 (190 aa).

An N-terminal signal peptide occupies residues 1-18 (MKLLLSLAFVLALSQVKA). Histamine is bound by residues Y54, D57, W60, E100, Y118, E153, and W155. 2 disulfides stabilise this stretch: C66-C187 and C137-C166.

This sequence belongs to the calycin superfamily. Histamine-binding salivary protein family. In terms of assembly, monomer. In terms of tissue distribution, expressed in salivary glands.

Its subcellular location is the secreted. Functionally, salivary tick protein that acts by scavenging histamine at the wound site, outcompeting histamine receptors for histamine, thereby overcoming host inflammatory responses. Binds histamine with a high-affinity (Kd=18 nM). Contains two binding histamine sites (H and L), that appear to bind histamine with differing affinities (high and low). In vivo, when tested on a mouse asthma model, shows a profound inhibitory effect on allergic asthma. Aerosol administration of this protein prevents airway hyperreactivity and abrogates peribronchial inflammation, eosinophil recruitment, mucus hypersecretion, and interleukins (IL-4 and IL-5) secretion. In addition, when tested on a mouse model of acute respiratory distress syndrome (ARDS), it attenuates endotoxin-induced acute lung injury. This is Female-specific histamine-binding protein 1 from Rhipicephalus appendiculatus (Brown ear tick).